A 538-amino-acid polypeptide reads, in one-letter code: Methionine--tRNA ligase (538 aa).

Positions 21–31 (YYVNDAPHLGH) match the 'HIGH' region motif. 4 residues coordinate Zn(2+): Cys-137, Cys-140, Cys-162, and His-165. Positions 313-317 (KMSKS) match the 'KMSKS' region motif. Lys-316 provides a ligand contact to ATP.

The protein belongs to the class-I aminoacyl-tRNA synthetase family. MetG type 2A subfamily. Monomer. The cofactor is Zn(2+).

It is found in the cytoplasm. It carries out the reaction tRNA(Met) + L-methionine + ATP = L-methionyl-tRNA(Met) + AMP + diphosphate. In terms of biological role, is required not only for elongation of protein synthesis but also for the initiation of all mRNA translation through initiator tRNA(fMet) aminoacylation. This Streptomyces coelicolor (strain ATCC BAA-471 / A3(2) / M145) protein is Methionine--tRNA ligase.